The primary structure comprises 155 residues: Large ribosomal subunit protein eL24 (155 aa).

Basic and acidic residues predominate over residues 93–123 (KRNARPETRNATRAKHAEAAKERKEKEAERR). The interval 93–155 (KRNARPETRN…SAPKVQATSR (63 aa)) is disordered.

The protein belongs to the eukaryotic ribosomal protein eL24 family.

The polypeptide is Large ribosomal subunit protein eL24 (RPL24) (Yarrowia lipolytica (strain CLIB 122 / E 150) (Yeast)).